The primary structure comprises 229 residues: 2-C-methyl-D-erythritol 4-phosphate cytidylyltransferase (229 aa).

Belongs to the IspD/TarI cytidylyltransferase family. IspD subfamily.

The catalysed reaction is 2-C-methyl-D-erythritol 4-phosphate + CTP + H(+) = 4-CDP-2-C-methyl-D-erythritol + diphosphate. It participates in isoprenoid biosynthesis; isopentenyl diphosphate biosynthesis via DXP pathway; isopentenyl diphosphate from 1-deoxy-D-xylulose 5-phosphate: step 2/6. Functionally, catalyzes the formation of 4-diphosphocytidyl-2-C-methyl-D-erythritol from CTP and 2-C-methyl-D-erythritol 4-phosphate (MEP). The protein is 2-C-methyl-D-erythritol 4-phosphate cytidylyltransferase of Clostridium botulinum (strain ATCC 19397 / Type A).